We begin with the raw amino-acid sequence, 325 residues long: tRNA dimethylallyltransferase (325 aa).

25–32 (GNTGSGKS) contacts ATP. 27-32 (TGSGKS) provides a ligand contact to substrate. The segment at 50–53 (DSRQ) is interaction with substrate tRNA.

The protein belongs to the IPP transferase family. In terms of assembly, monomer. The cofactor is Mg(2+).

It catalyses the reaction adenosine(37) in tRNA + dimethylallyl diphosphate = N(6)-dimethylallyladenosine(37) in tRNA + diphosphate. Catalyzes the transfer of a dimethylallyl group onto the adenine at position 37 in tRNAs that read codons beginning with uridine, leading to the formation of N6-(dimethylallyl)adenosine (i(6)A). This Dehalococcoides mccartyi (strain ATCC BAA-2266 / KCTC 15142 / 195) (Dehalococcoides ethenogenes (strain 195)) protein is tRNA dimethylallyltransferase.